We begin with the raw amino-acid sequence, 516 residues long: Protein indeterminate-domain 4, chloroplastic (516 aa).

Low complexity predominate over residues methionine 1–serine 26. The disordered stretch occupies residues methionine 1–glutamate 68. Residues methionine 1–valine 70 constitute a chloroplast transit peptide. At serine 73 the chain carries Phosphoserine. C2H2-type zinc fingers lie at residues phenylalanine 83–histidine 105 and tyrosine 124–histidine 154. The short motif at isoleucine 146–lysine 153 is the Nuclear localization signal element. The C2H2-type 2; degenerate zinc finger occupies tryptophan 159–glycine 182. Residues cysteine 161, cysteine 164, histidine 177, cysteine 181, cysteine 188, cysteine 190, histidine 203, and cysteine 207 each coordinate Zn(2+). The CCHC-type 2; atypical zinc-finger motif lies at tyrosine 186–alanine 209. Residues arginine 196–aspartate 208 are SHR-binding. Positions asparagine 483–glycine 516 are disordered. Gly residues predominate over residues arginine 484–arginine 495.

As to quaternary structure, binds to RGA and SCL3 competitively in the nucleus.

The protein resides in the plastid. It is found in the chloroplast. Its subcellular location is the nucleus. Its function is as follows. Transcription factor that may act a transcriptional activator of nuclear-encoded photosynthetic gene expression. Binds DNA via its zinc fingers. Recognizes and binds to SCL3 promoter sequence 5'-AGACAA-3' to promote its expression when in complex with RGA. The protein is Protein indeterminate-domain 4, chloroplastic of Arabidopsis thaliana (Mouse-ear cress).